Consider the following 730-residue polypeptide: Ribosomal RNA large subunit methyltransferase K/L (730 aa).

The THUMP domain maps to 46 to 157 (TAYRLCLWSR…RGEAILSLDL (112 aa)). The segment covering 399–408 (AAVEEGEPRR) has biased composition (basic and acidic residues). The interval 399 to 418 (AAVEEGEPRRQAPVASEPAR) is disordered.

The protein belongs to the methyltransferase superfamily. RlmKL family.

The protein resides in the cytoplasm. It carries out the reaction guanosine(2445) in 23S rRNA + S-adenosyl-L-methionine = N(2)-methylguanosine(2445) in 23S rRNA + S-adenosyl-L-homocysteine + H(+). The enzyme catalyses guanosine(2069) in 23S rRNA + S-adenosyl-L-methionine = N(2)-methylguanosine(2069) in 23S rRNA + S-adenosyl-L-homocysteine + H(+). In terms of biological role, specifically methylates the guanine in position 2445 (m2G2445) and the guanine in position 2069 (m7G2069) of 23S rRNA. The protein is Ribosomal RNA large subunit methyltransferase K/L of Pseudomonas entomophila (strain L48).